A 288-amino-acid polypeptide reads, in one-letter code: Pyridoxal kinase PdxY (288 aa).

Substrate contacts are provided by residues Ser-12 and Thr-47–Gln-48. Residues Asp-114, Glu-151, Lys-184, and Arg-211–Leu-214 contribute to the ATP site. Asp-225 serves as a coordination point for substrate.

The protein belongs to the pyridoxine kinase family. PdxY subfamily. Homodimer. Mg(2+) serves as cofactor.

It carries out the reaction pyridoxal + ATP = pyridoxal 5'-phosphate + ADP + H(+). It participates in cofactor metabolism; pyridoxal 5'-phosphate salvage; pyridoxal 5'-phosphate from pyridoxal: step 1/1. Its function is as follows. Pyridoxal kinase involved in the salvage pathway of pyridoxal 5'-phosphate (PLP). Catalyzes the phosphorylation of pyridoxal to PLP. This Pseudomonas syringae pv. tomato (strain ATCC BAA-871 / DC3000) protein is Pyridoxal kinase PdxY.